Consider the following 25-residue polypeptide: Acyl carrier protein (25 aa).

The 24-residue stretch at 2-25 (ESIEQRVKKIVAEQLGVAEAEIKA) folds into the Carrier domain.

It belongs to the acyl carrier protein (ACP) family. 4'-phosphopantetheine is transferred from CoA to a specific serine of apo-ACP by AcpS. This modification is essential for activity because fatty acids are bound in thioester linkage to the sulfhydryl of the prosthetic group.

It is found in the cytoplasm. It functions in the pathway lipid metabolism; fatty acid biosynthesis. Its function is as follows. Carrier of the growing fatty acid chain in fatty acid biosynthesis. This chain is Acyl carrier protein (acpP), found in Alcaligenes faecalis.